A 401-amino-acid polypeptide reads, in one-letter code: MHCDVLWHNAQLMTLDAADGGLGIVDDGTVACQQGRIVYAGPAAQAPALQPHATHDCQRRWISPGLIDCHTHLVYAGNRANEFEQRLRGASYADIAAAGGGIVATVRATRAADDAALLAASLPRLDAMLGEGVTTLEIKSGYGLTLDDEIKQLRVARQLAALRKVEVVPTFLGAHAVPPGGDAQRYTDQVCTQMIPAIAAQGLAEAVDVFCEHLAFSHAQAEQVFIAAQAHGLHIKIHAEQLSNQHGAELAARYGALSADHIEYLDQAGIAAMAGAGTVAVLLPGAFYFTRDTQVPPIAALRAAGVPLALATDCNPGTSPLTSPLLAMNMAATLFRMTVDECIAGFTREAARALGRSERLGRLRAGMDCDLAIWDIDAPADLVYRMGFNPLHARVLRGHLC.

Fe(3+) contacts are provided by His-70 and His-72. 2 residues coordinate Zn(2+): His-70 and His-72. 4-imidazolone-5-propanoate is bound by residues Arg-79, Tyr-142, and His-175. Position 142 (Tyr-142) interacts with N-formimidoyl-L-glutamate. His-238 lines the Fe(3+) pocket. His-238 contributes to the Zn(2+) binding site. Gln-241 provides a ligand contact to 4-imidazolone-5-propanoate. Asp-313 serves as a coordination point for Fe(3+). Asp-313 is a binding site for Zn(2+). Residues Asn-315 and Gly-317 each contribute to the N-formimidoyl-L-glutamate site. Thr-318 is a binding site for 4-imidazolone-5-propanoate.

It belongs to the metallo-dependent hydrolases superfamily. HutI family. Requires Zn(2+) as cofactor. The cofactor is Fe(3+).

It localises to the cytoplasm. It carries out the reaction 4-imidazolone-5-propanoate + H2O = N-formimidoyl-L-glutamate. It functions in the pathway amino-acid degradation; L-histidine degradation into L-glutamate; N-formimidoyl-L-glutamate from L-histidine: step 3/3. Functionally, catalyzes the hydrolytic cleavage of the carbon-nitrogen bond in imidazolone-5-propanoate to yield N-formimidoyl-L-glutamate. It is the third step in the universal histidine degradation pathway. This Xanthomonas oryzae pv. oryzae (strain MAFF 311018) protein is Imidazolonepropionase.